Here is a 1527-residue protein sequence, read N- to C-terminus: Peroxidasin (1527 aa).

Positions 1–23 (MRFMLLMLQLLGLLLLLAGGVQS) are cleaved as a signal peptide. The 30-residue stretch at 24-53 (VYCPAGCTCLERTVRCIRAKLSAVPKLPQD) folds into the LRRNT domain. 6 LRR repeats span residues 51-74 (PQDT…AFSG), 75-98 (LAQL…ALNG), 99-122 (LTAL…IFQR), 124-146 (PRLE…LFDN), 147-170 (LPRL…GFNR), and 172-196 (NNLK…LWRR). Ig-like C2-type domains lie at 236 to 322 (PQFL…QPVR), 365 to 453 (PHFT…ARIE), 458 to 545 (PEIL…ATIK), and 553 to 643 (PQLA…ALVT). Disulfide bonds link cysteine 257–cysteine 307, cysteine 388–cysteine 437, cysteine 479–cysteine 529, and cysteine 574–cysteine 627. Asparagine 419 is a glycosylation site (N-linked (GlcNAc...) asparagine). N-linked (GlcNAc...) asparagine glycosylation is found at asparagine 616, asparagine 673, asparagine 682, asparagine 731, and asparagine 767. A disulfide bridge connects residues cysteine 768 and cysteine 784. Aspartate 862 serves as a coordination point for heme b. Catalysis depends on histidine 863, which acts as the Proton acceptor. Residue aspartate 864 participates in Ca(2+) binding. Disulfide bonds link cysteine 882–cysteine 892 and cysteine 886–cysteine 909. Threonine 941, tyrosine 943, aspartate 945, and serine 947 together coordinate Ca(2+). N-linked (GlcNAc...) asparagine glycosylation is present at asparagine 962. A disulfide bridge links cysteine 994 with cysteine 1005. Residues glutamate 1015 and histidine 1109 each coordinate heme b. 2 N-linked (GlcNAc...) asparagine glycosylation sites follow: asparagine 1120 and asparagine 1213. Cystine bridges form between cysteine 1212–cysteine 1269 and cysteine 1310–cysteine 1336. The stretch at 1403–1441 (NEERVSGLEELIGSFQKELKKLHKKLRKLEDSCNSADSE) forms a coiled coil. The VWFC domain occupies 1463 to 1524 (SHCVDDKGTT…PPEACCPHCP (62 aa)).

It belongs to the peroxidase family. XPO subfamily. Homotrimer; disulfide-linked. Requires Ca(2+) as cofactor. Heme b serves as cofactor. Expressed in hemocytes. Also expressed in the fat body and gastric caeca.

The protein resides in the secreted. The enzyme catalyses (5R)-5-hydroxy-L-lysyl-[collagen] + L-methionyl-[collagen] + H2O2 = [collagen]-(5R)-5-hydroxy-L-lysyl-N-S-L-methionyl-[collagen] + 2 H2O + H(+). The catalysed reaction is bromide + H2O2 = hypobromite + H2O. It carries out the reaction (5R)-5-hydroxy-L-lysyl-[collagen] + L-methionyl-[collagen] + hypobromite = [collagen]-(5R)-5-hydroxy-L-lysyl-N-S-L-methionyl-[collagen] + bromide + H2O + H(+). It catalyses the reaction L-lysyl-[collagen] + L-methionyl-[collagen] + H2O2 = [collagen]-L-lysyl-N-S-L-methionyl-[collagen] + 2 H2O + H(+). The enzyme catalyses L-lysyl-[collagen] + L-methionyl-[collagen] + hypobromite = [collagen]-L-lysyl-N-S-L-methionyl-[collagen] + bromide + H2O + H(+). The catalysed reaction is L-tyrosyl-[protein] + bromide + H2O2 + H(+) = 3-bromo-L-tyrosyl-[protein] + 2 H2O. It carries out the reaction hypobromite + L-tyrosyl-[protein] + H(+) = 3-bromo-L-tyrosyl-[protein] + H2O. Its function is as follows. Catalyzes the two-electron oxidation of bromide by hydrogen peroxide and generates hypobromite as a reactive intermediate which mediates the formation of sulfilimine cross-links between methionine and hydroxylysine residues within an uncross-linked collagen IV NC1 hexamer. Plays a role in extracellular matrix consolidation, phagocytosis and defense. The chain is Peroxidasin from Drosophila melanogaster (Fruit fly).